The sequence spans 483 residues: Allantoate deiminase 2 (483 aa).

Residues 1 to 30 (MSSATASNTFFLHSCFLLFCLLSAPSCVSM) form the signal peptide. Residues His125, Asp136, Glu173, His239, and His457 each contribute to the Mn(2+) site.

The protein belongs to the peptidase M20A family. Homodimer. It depends on Mn(2+) as a cofactor. Expressed in stems and leaves, and at low levels in roots. Not detected in nodules.

The protein resides in the endoplasmic reticulum. It carries out the reaction allantoate + H2O + 2 H(+) = (S)-2-ureidoglycine + NH4(+) + CO2. In terms of biological role, involved in the catabolism of purine nucleotides. Can use allantoate as substrate. The sequential activity of AAH, UGLYAH and UAH allows a complete purine breakdown without the intermediate generation of urea. The polypeptide is Allantoate deiminase 2 (Glycine max (Soybean)).